Here is an 85-residue protein sequence, read N- to C-terminus: Small ribosomal subunit protein bS16 (85 aa).

Belongs to the bacterial ribosomal protein bS16 family.

The polypeptide is Small ribosomal subunit protein bS16 (Pseudomonas syringae pv. tomato (strain ATCC BAA-871 / DC3000)).